The following is a 355-amino-acid chain: Probable butyrate kinase (355 aa).

Belongs to the acetokinase family.

It localises to the cytoplasm. It carries out the reaction butanoate + ATP = butanoyl phosphate + ADP. In Clostridium botulinum (strain Alaska E43 / Type E3), this protein is Probable butyrate kinase.